Consider the following 292-residue polypeptide: tRNA pseudouridine synthase B (292 aa).

Aspartate 40 acts as the Nucleophile in catalysis.

Belongs to the pseudouridine synthase TruB family. Type 1 subfamily.

It catalyses the reaction uridine(55) in tRNA = pseudouridine(55) in tRNA. In terms of biological role, responsible for synthesis of pseudouridine from uracil-55 in the psi GC loop of transfer RNAs. This Mycoplasma mycoides subsp. mycoides SC (strain CCUG 32753 / NCTC 10114 / PG1) protein is tRNA pseudouridine synthase B.